A 290-amino-acid polypeptide reads, in one-letter code: Elongation factor Ts, mitochondrial 1 (290 aa).

The protein belongs to the EF-Ts family.

The protein localises to the mitochondrion. In terms of biological role, associates with the EF-Tu.GDP complex and induces the exchange of GDP to GTP. It remains bound to the aminoacyl-tRNA.EF-Tu.GTP complex up to the GTP hydrolysis stage on the ribosome. The polypeptide is Elongation factor Ts, mitochondrial 1 (Postia placenta (strain ATCC 44394 / Madison 698-R) (Brown rot fungus)).